A 74-amino-acid chain; its full sequence is Small ribosomal subunit protein bS18 (74 aa).

This sequence belongs to the bacterial ribosomal protein bS18 family. In terms of assembly, part of the 30S ribosomal subunit. Forms a tight heterodimer with protein bS6.

Functionally, binds as a heterodimer with protein bS6 to the central domain of the 16S rRNA, where it helps stabilize the platform of the 30S subunit. This is Small ribosomal subunit protein bS18 from Natranaerobius thermophilus (strain ATCC BAA-1301 / DSM 18059 / JW/NM-WN-LF).